A 283-amino-acid polypeptide reads, in one-letter code: Bifunctional protein FolD (283 aa).

NADP(+) contacts are provided by residues G164–S166, S189, and I230.

Belongs to the tetrahydrofolate dehydrogenase/cyclohydrolase family. In terms of assembly, homodimer.

The enzyme catalyses (6R)-5,10-methylene-5,6,7,8-tetrahydrofolate + NADP(+) = (6R)-5,10-methenyltetrahydrofolate + NADPH. The catalysed reaction is (6R)-5,10-methenyltetrahydrofolate + H2O = (6R)-10-formyltetrahydrofolate + H(+). It participates in one-carbon metabolism; tetrahydrofolate interconversion. Catalyzes the oxidation of 5,10-methylenetetrahydrofolate to 5,10-methenyltetrahydrofolate and then the hydrolysis of 5,10-methenyltetrahydrofolate to 10-formyltetrahydrofolate. This chain is Bifunctional protein FolD, found in Lacticaseibacillus paracasei (strain ATCC 334 / BCRC 17002 / CCUG 31169 / CIP 107868 / KCTC 3260 / NRRL B-441) (Lactobacillus paracasei).